We begin with the raw amino-acid sequence, 110 residues long: U32-theraphotoxin-Cg1a (110 aa).

The signal sequence occupies residues 1–19 (MKHCFLILFTLIVFTVVWS). Residues 20-43 (LEENEEYPDEDEMIESFMDGYSYR) constitute a propeptide that is removed on maturation. 4 cysteine pairs are disulfide-bonded: Cys49/Cys63, Cys56/Cys69, Cys60/Cys105, and Cys62/Cys80.

It belongs to the neurotoxin 03 (Tx2) family. 02 subfamily. Expressed by the venom gland.

The protein resides in the secreted. Its function is as follows. Probable ion channel inhibitor. The chain is U32-theraphotoxin-Cg1a from Chilobrachys guangxiensis (Chinese earth tiger tarantula).